The chain runs to 151 residues: 3-hydroxyacyl-[acyl-carrier-protein] dehydratase FabZ (151 aa).

The active site involves histidine 57.

This sequence belongs to the thioester dehydratase family. FabZ subfamily.

Its subcellular location is the cytoplasm. It carries out the reaction a (3R)-hydroxyacyl-[ACP] = a (2E)-enoyl-[ACP] + H2O. Involved in unsaturated fatty acids biosynthesis. Catalyzes the dehydration of short chain beta-hydroxyacyl-ACPs and long chain saturated and unsaturated beta-hydroxyacyl-ACPs. This Tolumonas auensis (strain DSM 9187 / NBRC 110442 / TA 4) protein is 3-hydroxyacyl-[acyl-carrier-protein] dehydratase FabZ.